An 866-amino-acid chain; its full sequence is Ribosome biogenesis protein BOP1 homolog (866 aa).

Disordered regions lie at residues M1–R180 and P214–I241. Composition is skewed to acidic residues over residues V37–N52, G60–P146, and T167–T179. WD repeat units lie at residues G527–T566, P568–V608, K697–K735, P738–Q777, L781–Q820, and V836–T866.

Belongs to the WD repeat BOP1/ERB1 family.

Its subcellular location is the nucleus. The protein resides in the nucleolus. The protein localises to the nucleoplasm. In terms of biological role, required for maturation of ribosomal RNAs and formation of the large ribosomal subunit. The polypeptide is Ribosome biogenesis protein BOP1 homolog (Aedes aegypti (Yellowfever mosquito)).